Reading from the N-terminus, the 180-residue chain is NADH-quinone oxidoreductase subunit I (180 aa).

4Fe-4S ferredoxin-type domains are found at residues 48–80 and 90–119; these read IVLT…LQKA and EFFR…LTPD. [4Fe-4S] cluster-binding residues include Cys-60, Cys-63, Cys-66, Cys-70, Cys-99, Cys-102, Cys-105, and Cys-109.

The protein belongs to the complex I 23 kDa subunit family. As to quaternary structure, NDH-1 is composed of 13 different subunits. Subunits NuoA, H, J, K, L, M, N constitute the membrane sector of the complex. [4Fe-4S] cluster serves as cofactor.

It is found in the cell inner membrane. The enzyme catalyses a quinone + NADH + 5 H(+)(in) = a quinol + NAD(+) + 4 H(+)(out). In terms of biological role, NDH-1 shuttles electrons from NADH, via FMN and iron-sulfur (Fe-S) centers, to quinones in the respiratory chain. The immediate electron acceptor for the enzyme in this species is believed to be ubiquinone. Couples the redox reaction to proton translocation (for every two electrons transferred, four hydrogen ions are translocated across the cytoplasmic membrane), and thus conserves the redox energy in a proton gradient. This Cronobacter sakazakii (strain ATCC BAA-894) (Enterobacter sakazakii) protein is NADH-quinone oxidoreductase subunit I.